A 294-amino-acid chain; its full sequence is S-adenosylmethionine uptake transporter (294 aa).

Helical transmembrane passes span 8–28, 41–61, 74–91, 98–118, 121–141, 148–168, 177–197, 207–227, 237–257, and 260–280; these read YLTG…NDVI, VAFF…VYYG, ILRG…TYGL, TATV…VFFL, NIIW…VVTL, FNPE…LDII, SMIS…LPVA, FELA…FFLL, ATAP…YFIF, and FPDK…LFII. 2 EamA domains span residues 21–141 and 160–280; these read SSSA…VVTL and ISFA…LFII.

It belongs to the drug/metabolite transporter (DMT) superfamily. 10 TMS drug/metabolite exporter (DME) (TC 2.A.7.3) family.

The protein localises to the cell inner membrane. Transports S-adenosylmethionine. This Rickettsia conorii (strain ATCC VR-613 / Malish 7) protein is S-adenosylmethionine uptake transporter (sam).